Consider the following 75-residue polypeptide: Conotoxin TsMEKL-011 (75 aa).

Residues 1 to 19 form the signal peptide; sequence MEKLTILLLVAAVLMSTQA. Positions 20 to 45 are excised as a propeptide; the sequence is LIQRGGAKRRKVNFFSIREPGAEDWR. 3 disulfides stabilise this stretch: cysteine 49-cysteine 63, cysteine 56-cysteine 67, and cysteine 62-cysteine 71.

It belongs to the conotoxin O2 superfamily. Expressed by the venom duct.

It is found in the secreted. The protein is Conotoxin TsMEKL-011 of Conus tessulatus (Tessellate cone).